Here is a 175-residue protein sequence, read N- to C-terminus: Bifunctional protein PyrR (175 aa).

A PRPP-binding motif is present at residues 98-110 (VIIIDDVLYTGRT).

This sequence belongs to the purine/pyrimidine phosphoribosyltransferase family. PyrR subfamily. Homodimer and homohexamer; in equilibrium.

It catalyses the reaction UMP + diphosphate = 5-phospho-alpha-D-ribose 1-diphosphate + uracil. Its function is as follows. Regulates transcriptional attenuation of the pyrimidine nucleotide (pyr) operon by binding in a uridine-dependent manner to specific sites on pyr mRNA. This disrupts an antiterminator hairpin in the RNA and favors formation of a downstream transcription terminator, leading to a reduced expression of downstream genes. Functionally, also displays a weak uracil phosphoribosyltransferase activity which is not physiologically significant. The polypeptide is Bifunctional protein PyrR (Staphylococcus aureus (strain bovine RF122 / ET3-1)).